Reading from the N-terminus, the 461-residue chain is Vitamin K-dependent protein C (461 aa).

Residues Met1–Gly18 form the signal peptide. Positions Val19–Arg41 are excised as a propeptide. Residues Ala42–Asp87 enclose the Gla domain. 4-carboxyglutamate occurs at positions 47, 48, 55, 57, 60, 61, 66, 67, 70, and 76. Cys58 and Cys63 form a disulfide bridge. Cystine bridges form between Cys91–Cys110, Cys100–Cys105, Cys104–Cys119, Cys121–Cys130, Cys139–Cys150, Cys146–Cys159, Cys161–Cys174, Cys182–Cys320, and Cys239–Cys255. EGF-like domains lie at Leu96–Gln131 and Gly135–Arg175. A (3R)-3-hydroxyaspartate modification is found at Asp112. Residues Ile213–Gly450 enclose the Peptidase S1 domain. N-linked (GlcNAc...) asparagine glycosylation occurs at Asn215. His254 (charge relay system) is an active-site residue. Asn291 is a glycosylation site (N-linked (GlcNAc...) asparagine). Catalysis depends on Asp300, which acts as the Charge relay system. Asn355 is a glycosylation site (N-linked (GlcNAc...) asparagine). 2 disulfide bridges follow: Cys373–Cys387 and Cys398–Cys426. The Charge relay system role is filled by Ser402.

Belongs to the peptidase S1 family. In terms of assembly, synthesized as a single chain precursor, which is cleaved into a light chain and a heavy chain held together by a disulfide bond. The enzyme is then activated by thrombin, which cleaves a tetradecapeptide from the amino end of the heavy chain; this reaction, which occurs at the surface of endothelial cells, is strongly promoted by thrombomodulin. Post-translationally, the vitamin K-dependent, enzymatic carboxylation of some Glu residues allows the modified protein to bind calcium. The iron and 2-oxoglutarate dependent 3-hydroxylation of aspartate and asparagine is (R) stereospecific within EGF domains. In terms of tissue distribution, plasma; synthesized in the liver.

The protein localises to the secreted. The protein resides in the golgi apparatus. It is found in the endoplasmic reticulum. It carries out the reaction Degradation of blood coagulation factors Va and VIIIa.. Its function is as follows. Protein C is a vitamin K-dependent serine protease that regulates blood coagulation by inactivating factors Va and VIIIa in the presence of calcium ions and phospholipids. Exerts a protective effect on the endothelial cell barrier function. This is Vitamin K-dependent protein C (Proc) from Rattus norvegicus (Rat).